Consider the following 616-residue polypeptide: Dihydroxy-acid dehydratase (616 aa).

Residue aspartate 81 coordinates Mg(2+). Cysteine 122 provides a ligand contact to [2Fe-2S] cluster. The Mg(2+) site is built by aspartate 123 and lysine 124. Lysine 124 is subject to N6-carboxylysine. Position 195 (cysteine 195) interacts with [2Fe-2S] cluster. Glutamate 491 provides a ligand contact to Mg(2+). Serine 517 (proton acceptor) is an active-site residue.

It belongs to the IlvD/Edd family. In terms of assembly, homodimer. It depends on [2Fe-2S] cluster as a cofactor. The cofactor is Mg(2+).

The enzyme catalyses (2R)-2,3-dihydroxy-3-methylbutanoate = 3-methyl-2-oxobutanoate + H2O. The catalysed reaction is (2R,3R)-2,3-dihydroxy-3-methylpentanoate = (S)-3-methyl-2-oxopentanoate + H2O. Its pathway is amino-acid biosynthesis; L-isoleucine biosynthesis; L-isoleucine from 2-oxobutanoate: step 3/4. The protein operates within amino-acid biosynthesis; L-valine biosynthesis; L-valine from pyruvate: step 3/4. Functionally, functions in the biosynthesis of branched-chain amino acids. Catalyzes the dehydration of (2R,3R)-2,3-dihydroxy-3-methylpentanoate (2,3-dihydroxy-3-methylvalerate) into 2-oxo-3-methylpentanoate (2-oxo-3-methylvalerate) and of (2R)-2,3-dihydroxy-3-methylbutanoate (2,3-dihydroxyisovalerate) into 2-oxo-3-methylbutanoate (2-oxoisovalerate), the penultimate precursor to L-isoleucine and L-valine, respectively. This is Dihydroxy-acid dehydratase from Salmonella paratyphi A (strain ATCC 9150 / SARB42).